We begin with the raw amino-acid sequence, 1232 residues long: DNA topoisomerase 2 (1232 aa).

ATP-binding positions include N65, N94, 122–124 (SSN), 135–142 (GRHGYGAK), and 352–354 (QNK). A Toprim domain is found at 432 to 546 (RTLIVTEGDS…SLLNRNPGFI (115 aa)). Residues E438, D515, and D517 each contribute to the Mg(2+) site. One can recognise a Topo IIA-type catalytic domain in the interval 681-1097 (LAHAVDGLKP…APVQMWLDEL (417 aa)). The active-site O-(5'-phospho-DNA)-tyrosine intermediate is Y771. The interaction with DNA stretch occupies residues 952-961 (SLTQRIYING). The interval 1161–1184 (YVPPPPSKRPHVGQSVGGGGGGGS) is disordered. Residues 1175–1184 (SVGGGGGGGS) are compositionally biased toward gly residues.

The protein belongs to the type II topoisomerase family. Homodimer. Requires Mg(2+) as cofactor. Mn(2+) is required as a cofactor. It depends on Ca(2+) as a cofactor.

The protein localises to the nucleus. It catalyses the reaction ATP-dependent breakage, passage and rejoining of double-stranded DNA.. Functionally, control of topological states of DNA by transient breakage and subsequent rejoining of DNA strands. Topoisomerase II makes double-strand breaks. The polypeptide is DNA topoisomerase 2 (TOP2) (Trypanosoma cruzi).